Here is an 837-residue protein sequence, read N- to C-terminus: Telomere length regulation protein TEL2 homolog (837 aa).

Met-1 is subject to N-acetylmethionine. Residues Pro-374, Pro-419, and Pro-422 each carry the hydroxyproline modification. The segment at 444 to 472 (QPAGDGASEAGTSLVPATAEPPAETPAEI) is disordered. Ser-456 bears the Phosphoserine mark. The span at 459 to 471 (PATAEPPAETPAE) shows a compositional bias: low complexity. Ser-485 is modified (phosphoserine; by CK2). A phosphoserine mark is found at Ser-487 and Ser-491. Positions 627 to 651 (GCLGRTPQPGSPSPNTPCLPEAAVS) are disordered. Ser-688 and Ser-836 each carry phosphoserine.

It belongs to the TEL2 family. As to quaternary structure, component of the TTT complex composed of TELO2, TTI1 and TTI2. Interacts with ATM, ATR, MTOR, PRKDC, RUVBL2, TTI1, TTI2, SMG1 and TRRAP. Component of the mTORC1 and mTORC2 complexes. Interacts (phosphorylated form) with PIH1D1 which mediates interaction of TELO2 with the R2TP complex composed of RUVBL1, RUVBL2, PIH1D1, and RPAP3. In terms of processing, hydroxylation by PHD3 is required for a proper interaction with ATR, and activation of the ATR/CHK1/p53 pathway following DNA damage. Post-translationally, phosphorylated at Ser-485 by CK2 following growth factor deprivation, leading to its subsequent ubiquitination by the SCF(FBXO9) complex. Phosphorylation by CK2 only takes place when TELO2 is bound to mTORC1, not mTORC2; leading to selective ubiquitination of mTORC1-associated protein. Ubiquitinated by the SCF(FBXO9) complex following phosphorylation by CK2 in response to growth factor deprivation, leading to its degradation by the proteasome. Only mTORC1-associated protein is ubiquitinated and degraded, leading to selective inactivation of mTORC1 to restrain cell growth and protein translation, while mTORC2 is activated due to the relief of feedback inhibition by mTORC1.

The protein resides in the cytoplasm. Its subcellular location is the membrane. It is found in the nucleus. It localises to the chromosome. The protein localises to the telomere. Regulator of the DNA damage response (DDR). Part of the TTT complex that is required to stabilize protein levels of the phosphatidylinositol 3-kinase-related protein kinase (PIKK) family proteins. The TTT complex is involved in the cellular resistance to DNA damage stresses, like ionizing radiation (IR), ultraviolet (UV) and mitomycin C (MMC). Together with the TTT complex and HSP90 may participate in the proper folding of newly synthesized PIKKs. Promotes assembly, stabilizes and maintains the activity of mTORC1 and mTORC2 complexes, which regulate cell growth and survival in response to nutrient and hormonal signals. May be involved in telomere length regulation. The polypeptide is Telomere length regulation protein TEL2 homolog (TELO2) (Homo sapiens (Human)).